The primary structure comprises 365 residues: DNA polymerase IV 1 (365 aa).

The UmuC domain occupies 6-196 (VLHIDMDYFF…LNVSKLWGIG (191 aa)). The Mg(2+) site is built by Asp10 and Asp113. Glu114 is a catalytic residue.

The protein belongs to the DNA polymerase type-Y family. In terms of assembly, monomer. It depends on Mg(2+) as a cofactor.

The protein resides in the cytoplasm. It catalyses the reaction DNA(n) + a 2'-deoxyribonucleoside 5'-triphosphate = DNA(n+1) + diphosphate. Poorly processive, error-prone DNA polymerase involved in untargeted mutagenesis. Copies undamaged DNA at stalled replication forks, which arise in vivo from mismatched or misaligned primer ends. These misaligned primers can be extended by PolIV. Exhibits no 3'-5' exonuclease (proofreading) activity. May be involved in translesional synthesis. This chain is DNA polymerase IV 1 (dbh1), found in Methanosarcina mazei (strain ATCC BAA-159 / DSM 3647 / Goe1 / Go1 / JCM 11833 / OCM 88) (Methanosarcina frisia).